Here is a 134-residue protein sequence, read N- to C-terminus: Calcitonin gene-related peptide 2 (134 aa).

The first 26 residues, 1 to 26 (MDFWKFFPFLALSSMWVLCLASSLQA), serve as a signal peptide directing secretion. Residues 27–86 (APFRSALESSLDLGTLSDQEKHLLLAALIQDYEQKARKLEQEEQETEGSRKGSSSSVISQ) constitute a propeptide that is removed on maturation. The tract at residues 65–91 (LEQEEQETEGSRKGSSSSVISQKRSCN) is disordered. A compositionally biased stretch (low complexity) spans 77-89 (KGSSSSVISQKRS). C90 and C95 form a disulfide bridge. Residue F125 is modified to Phenylalanine amide. Positions 131 to 134 (DLRV) are excised as a propeptide.

Belongs to the calcitonin family.

The protein resides in the secreted. Functionally, CALCB/CGRP2 is a peptide hormone that induces vasodilation mediated by the CALCRL-RAMP1 receptor complex. Dilates a variety of vessels including the coronary, cerebral and systemic vasculature. Its abundance in the CNS also points toward a neurotransmitter or neuromodulator role. This is Calcitonin gene-related peptide 2 from Rattus norvegicus (Rat).